A 557-amino-acid chain; its full sequence is Dihydroxy-acid dehydratase (557 aa).

Aspartate 78 lines the Mg(2+) pocket. Cysteine 119 contacts [2Fe-2S] cluster. Residues aspartate 120 and lysine 121 each coordinate Mg(2+). N6-carboxylysine is present on lysine 121. Position 192 (cysteine 192) interacts with [2Fe-2S] cluster. Glutamate 442 serves as a coordination point for Mg(2+). Serine 468 serves as the catalytic Proton acceptor.

It belongs to the IlvD/Edd family. In terms of assembly, homodimer. [2Fe-2S] cluster serves as cofactor. It depends on Mg(2+) as a cofactor.

It catalyses the reaction (2R)-2,3-dihydroxy-3-methylbutanoate = 3-methyl-2-oxobutanoate + H2O. The catalysed reaction is (2R,3R)-2,3-dihydroxy-3-methylpentanoate = (S)-3-methyl-2-oxopentanoate + H2O. The protein operates within amino-acid biosynthesis; L-isoleucine biosynthesis; L-isoleucine from 2-oxobutanoate: step 3/4. It functions in the pathway amino-acid biosynthesis; L-valine biosynthesis; L-valine from pyruvate: step 3/4. Functions in the biosynthesis of branched-chain amino acids. Catalyzes the dehydration of (2R,3R)-2,3-dihydroxy-3-methylpentanoate (2,3-dihydroxy-3-methylvalerate) into 2-oxo-3-methylpentanoate (2-oxo-3-methylvalerate) and of (2R)-2,3-dihydroxy-3-methylbutanoate (2,3-dihydroxyisovalerate) into 2-oxo-3-methylbutanoate (2-oxoisovalerate), the penultimate precursor to L-isoleucine and L-valine, respectively. The polypeptide is Dihydroxy-acid dehydratase (Bacillus cereus (strain 03BB102)).